A 569-amino-acid chain; its full sequence is Probable pyruvate decarboxylase Pdc101 (569 aa).

Residues D33 and H120 each contribute to the substrate site. Residue S233 is modified to Phosphoserine. Residues 396–478 (DSWFNGLQMK…FLLNNRGYTI (83 aa)) are thiamine pyrophosphate binding. Mg(2+)-binding residues include D446, N473, and G475. E479 is a binding site for substrate. T521 carries the phosphothreonine modification. S522 is modified (phosphoserine).

This sequence belongs to the TPP enzyme family. In terms of assembly, homotetramer. The cofactor is a metal cation. Requires thiamine diphosphate as cofactor.

It catalyses the reaction a 2-oxocarboxylate + H(+) = an aldehyde + CO2. This chain is Probable pyruvate decarboxylase Pdc101 (pdc101), found in Schizosaccharomyces pombe (strain 972 / ATCC 24843) (Fission yeast).